The primary structure comprises 189 residues: dCTP deaminase (189 aa).

Residues 112-117, 136-138, Q157, Y171, and Q181 contribute to the dCTP site; these read KSTYAR and TLE. The active-site Proton donor/acceptor is the E138.

Belongs to the dCTP deaminase family. Homotrimer.

It catalyses the reaction dCTP + H2O + H(+) = dUTP + NH4(+). It functions in the pathway pyrimidine metabolism; dUMP biosynthesis; dUMP from dCTP (dUTP route): step 1/2. Catalyzes the deamination of dCTP to dUTP. The polypeptide is dCTP deaminase (Xanthomonas oryzae pv. oryzae (strain MAFF 311018)).